The chain runs to 335 residues: Anthranilate phosphoribosyltransferase (335 aa).

Residues glycine 79, 82-83 (GD), serine 87, 89-92 (NIST), 107-115 (KHGNRSISS), and serine 119 each bind 5-phospho-alpha-D-ribose 1-diphosphate. Residue glycine 79 participates in anthranilate binding. Serine 91 is a Mg(2+) binding site. Asparagine 110 is a binding site for anthranilate. Arginine 165 is an anthranilate binding site. Residues aspartate 224 and glutamate 225 each coordinate Mg(2+).

It belongs to the anthranilate phosphoribosyltransferase family. In terms of assembly, homodimer. Requires Mg(2+) as cofactor.

It catalyses the reaction N-(5-phospho-beta-D-ribosyl)anthranilate + diphosphate = 5-phospho-alpha-D-ribose 1-diphosphate + anthranilate. It participates in amino-acid biosynthesis; L-tryptophan biosynthesis; L-tryptophan from chorismate: step 2/5. Its function is as follows. Catalyzes the transfer of the phosphoribosyl group of 5-phosphorylribose-1-pyrophosphate (PRPP) to anthranilate to yield N-(5'-phosphoribosyl)-anthranilate (PRA). This chain is Anthranilate phosphoribosyltransferase, found in Streptococcus mutans serotype c (strain ATCC 700610 / UA159).